A 728-amino-acid chain; its full sequence is Phosphoribosylformylglycinamidine synthase subunit PurL (728 aa).

Residue His42 is part of the active site. The ATP site is built by Tyr45 and Lys84. Mg(2+) is bound at residue Glu86. Substrate contacts are provided by residues 87–90 and Arg109; that span reads SHNH. His88 functions as the Proton acceptor in the catalytic mechanism. Asp110 contacts Mg(2+). Gln237 provides a ligand contact to substrate. Asp265 serves as a coordination point for Mg(2+). 309 to 311 is a substrate binding site; it reads ESQ. Asp491 and Gly528 together coordinate ATP. Asn529 serves as a coordination point for Mg(2+). Position 531 (Ser531) interacts with substrate.

Belongs to the FGAMS family. In terms of assembly, monomer. Part of the FGAM synthase complex composed of 1 PurL, 1 PurQ and 2 PurS subunits.

The protein resides in the cytoplasm. The enzyme catalyses N(2)-formyl-N(1)-(5-phospho-beta-D-ribosyl)glycinamide + L-glutamine + ATP + H2O = 2-formamido-N(1)-(5-O-phospho-beta-D-ribosyl)acetamidine + L-glutamate + ADP + phosphate + H(+). It participates in purine metabolism; IMP biosynthesis via de novo pathway; 5-amino-1-(5-phospho-D-ribosyl)imidazole from N(2)-formyl-N(1)-(5-phospho-D-ribosyl)glycinamide: step 1/2. Functionally, part of the phosphoribosylformylglycinamidine synthase complex involved in the purines biosynthetic pathway. Catalyzes the ATP-dependent conversion of formylglycinamide ribonucleotide (FGAR) and glutamine to yield formylglycinamidine ribonucleotide (FGAM) and glutamate. The FGAM synthase complex is composed of three subunits. PurQ produces an ammonia molecule by converting glutamine to glutamate. PurL transfers the ammonia molecule to FGAR to form FGAM in an ATP-dependent manner. PurS interacts with PurQ and PurL and is thought to assist in the transfer of the ammonia molecule from PurQ to PurL. This chain is Phosphoribosylformylglycinamidine synthase subunit PurL, found in Campylobacter jejuni subsp. doylei (strain ATCC BAA-1458 / RM4099 / 269.97).